The primary structure comprises 359 residues: Glucose 1-dehydrogenase (359 aa).

A Zn(2+)-binding site is contributed by C39. Substrate is bound at residue T41. Positions 64 and 65 each coordinate Zn(2+). Positions 116 and 152 each coordinate substrate. Zn(2+) is bound at residue E152. 183–186 (AGPI) is an NADP(+) binding site.

Belongs to the zinc-containing alcohol dehydrogenase family. Glucose 1-dehydrogenase subfamily. Requires Zn(2+) as cofactor.

The catalysed reaction is D-glucose + NAD(+) = D-glucono-1,5-lactone + NADH + H(+). It catalyses the reaction D-glucose + NADP(+) = D-glucono-1,5-lactone + NADPH + H(+). Functionally, catalyzes the NAD(P)(+)-dependent oxidation of D-glucose to D-gluconate via gluconolactone. Can utilize both NAD(+) and NADP(+) as electron acceptor. Is involved in the degradation of glucose through a non-phosphorylative variant of the Entner-Doudoroff pathway. This is Glucose 1-dehydrogenase from Methanocella arvoryzae (strain DSM 22066 / NBRC 105507 / MRE50).